Consider the following 365-residue polypeptide: Aminomethyltransferase (365 aa).

This sequence belongs to the GcvT family. In terms of assembly, the glycine cleavage system is composed of four proteins: P, T, L and H.

It catalyses the reaction N(6)-[(R)-S(8)-aminomethyldihydrolipoyl]-L-lysyl-[protein] + (6S)-5,6,7,8-tetrahydrofolate = N(6)-[(R)-dihydrolipoyl]-L-lysyl-[protein] + (6R)-5,10-methylene-5,6,7,8-tetrahydrofolate + NH4(+). The glycine cleavage system catalyzes the degradation of glycine. In Chlorobaculum parvum (strain DSM 263 / NCIMB 8327) (Chlorobium vibrioforme subsp. thiosulfatophilum), this protein is Aminomethyltransferase.